The primary structure comprises 209 residues: Large ribosomal subunit protein uL3 (209 aa).

Residues 141–163 (RAVGSMGASSDPSRTFKNKRMPG) form a disordered region.

The protein belongs to the universal ribosomal protein uL3 family. As to quaternary structure, part of the 50S ribosomal subunit. Forms a cluster with proteins L14 and L19.

Functionally, one of the primary rRNA binding proteins, it binds directly near the 3'-end of the 23S rRNA, where it nucleates assembly of the 50S subunit. In Clostridium botulinum (strain Kyoto / Type A2), this protein is Large ribosomal subunit protein uL3.